Consider the following 816-residue polypeptide: Mitogen-activated protein kinase 7 (816 aa).

The tract at residues 1-26 (MAEPLKEEDGEDGSAEPPGPVKAEPA) is disordered. Position 2 is an N-acetylalanine (Ala2). The segment at 2-77 (AEPLKEEDGE…VVSSARRRLT (76 aa)) is required for cytoplasmic targeting. One can recognise a Protein kinase domain in the interval 55–347 (YEIIETIGNG…AAAALRHPFL (293 aa)). ATP-binding positions include 61 to 69 (IGNGAYGVV) and Lys84. Residues 78 to 139 (GQQVAIKKIP…FKSVYVVLDL (62 aa)) form a required for binding to MAP2K5 region. Positions 140 to 406 (MESDLHQIIH…QQIRFQPSLQ (267 aa)) are necessary for oligomerization. The Proton acceptor role is filled by Asp182. Positions 219 to 221 (TEY) match the TXY motif. The tract at residues 406–737 (QPVASEPGCP…PVFSGTPKGS (332 aa)) is disordered. Positions 407–806 (PVASEPGCPD…REIQMDSPML (400 aa)) are may not be required for kinase activity; required to stimulate MEF2C activity. 2 stretches are compositionally biased toward pro residues: residues 433 to 445 (SPPP…PGPA) and 454 to 463 (QPPPPVSEPA). The span at 476–486 (KAALKAALLKS) shows a compositional bias: low complexity. Composition is skewed to basic and acidic residues over residues 502–519 (PEPR…EREE), 527–544 (RAKE…KERG), and 563–573 (DNDRSLLERWT). Residues 505–539 (RKPVTAQERQREREEKRRRRQERAKEREKRRQERE) carry the Nuclear localization signal motif. Over residues 578 to 587 (PAAPALTSVP) the composition is skewed to low complexity. Pro residues-rich tracts occupy residues 588-610 (APAP…PGPV) and 628-655 (VPQP…PAPP). The span at 676-685 (PGSSTPGVLP) shows a compositional bias: low complexity. The span at 686 to 695 (YFPPGLPPPD) shows a compositional bias: pro residues. Positions 701-720 (QSSMSESPDVNLVTQQLSKS) are enriched in polar residues. At Ser720 the chain carries Phosphoserine. Thr733 carries the phosphothreonine modification.

The protein belongs to the protein kinase superfamily. CMGC Ser/Thr protein kinase family. MAP kinase subfamily. As to quaternary structure, interacts with MAP2K5. Forms oligomers. Interacts with MEF2A, MEF2C and MEF2D; the interaction phosphorylates the MEF2s and enhances transcriptional activity of MEF2A, MEF2C but not MEF2D. Interacts with SGK1. Preferentially interacts with PML isoform PML-4 but shows interaction also with its other isoforms: isoform PML-1, isoform PML-2, isoform PML-3 and isoform PML-6. Interacts (via N-terminal half) with HSP90AB1-CDC37 chaperone complex in resting cells; the interaction is MAP2K5-independent and prevents MAPK7 from ubiquitination and proteasomal degradation. Interacts with STUB1/CHIP; the interaction is enhanced in the presence of IGF1 or MAP2K5 and promotes STUB1/CHIP E3 ligase activity. It depends on Mg(2+) as a cofactor. Post-translationally, dually phosphorylated on Thr-219 and Tyr-221, which activates the enzyme. Autophosphorylated in vitro on threonine and tyrosine residues when the C-terminal part of the kinase, which could have a regulatory role, is absent. As to expression, expressed in many adult tissues. Abundant in heart, placenta, lung, kidney and skeletal muscle. Not detectable in liver.

It localises to the cytoplasm. Its subcellular location is the nucleus. The protein localises to the PML body. It catalyses the reaction L-seryl-[protein] + ATP = O-phospho-L-seryl-[protein] + ADP + H(+). It carries out the reaction L-threonyl-[protein] + ATP = O-phospho-L-threonyl-[protein] + ADP + H(+). Its activity is regulated as follows. Activated by tyrosine and threonine phosphorylation. Activated in response to hyperosmolarity, hydrogen peroxide, and epidermal growth factor (EGF). Its function is as follows. Plays a role in various cellular processes such as proliferation, differentiation and cell survival. The upstream activator of MAPK7 is the MAPK kinase MAP2K5. Upon activation, it translocates to the nucleus and phosphorylates various downstream targets including MEF2C. EGF activates MAPK7 through a Ras-independent and MAP2K5-dependent pathway. As part of the MAPK/ERK signaling pathway, acts as a negative regulator of apoptosis in cardiomyocytes via interaction with STUB1/CHIP and promotion of STUB1-mediated ubiquitination and degradation of ICER-type isoforms of CREM. May have a role in muscle cell differentiation. May be important for endothelial function and maintenance of blood vessel integrity. MAP2K5 and MAPK7 interact specifically with one another and not with MEK1/ERK1 or MEK2/ERK2 pathways. Phosphorylates SGK1 at Ser-78 and this is required for growth factor-induced cell cycle progression. Involved in the regulation of p53/TP53 by disrupting the PML-MDM2 interaction. The polypeptide is Mitogen-activated protein kinase 7 (MAPK7) (Homo sapiens (Human)).